Reading from the N-terminus, the 831-residue chain is uncharacterized protein (831 aa).

The 146-residue stretch at 1–146 folds into the CID domain; the sequence is MDIFDSTITS…RAFSILSGVA (146 aa). 4 disordered regions span residues 205-233, 265-354, 434-480, and 572-831; these read SSSS…SSIS, KEHF…NYNN, IGNS…NEDS, and CGAD…SNRH. Low complexity-rich tracts occupy residues 272 to 354 and 434 to 477; these read NDTS…NYNN and IGNS…NNNN. 2 stretches are compositionally biased toward basic and acidic residues: residues 592 to 601 and 611 to 813; these read NENKQNDSHR and SRGE…RSKE. The span at 817 to 831 shows a compositional bias: low complexity; it reads NNDNRSSSNRSSNRH.

This is an uncharacterized protein from Dictyostelium discoideum (Social amoeba).